Consider the following 82-residue polypeptide: MAGKSEFNIFKHVLVPEHRILSEEEKKALLEKYRITPAQLPQIKASDPAVKALGAKPGDIIEIKRKSPTAGVYYYYRVVVED.

Belongs to the archaeal Rpo5/eukaryotic RPB5 RNA polymerase subunit family. Part of the RNA polymerase complex.

The protein resides in the cytoplasm. The catalysed reaction is RNA(n) + a ribonucleoside 5'-triphosphate = RNA(n+1) + diphosphate. Its function is as follows. DNA-dependent RNA polymerase (RNAP) catalyzes the transcription of DNA into RNA using the four ribonucleoside triphosphates as substrates. In Pyrococcus abyssi (strain GE5 / Orsay), this protein is DNA-directed RNA polymerase subunit Rpo5.